The following is a 129-amino-acid chain: Ferredoxin-1 (129 aa).

One can recognise a 2Fe-2S ferredoxin-type domain in the interval 29 to 120 (SDMDLDDEDY…EVKIVYNAKH (92 aa)). Residues Cys64, Cys69, Cys72, and Cys103 each contribute to the [2Fe-2S] cluster site.

It belongs to the 2Fe2S plant-type ferredoxin family. Requires [2Fe-2S] cluster as cofactor.

Ferredoxins are iron-sulfur proteins that transfer electrons in a wide variety of metabolic reactions. The chain is Ferredoxin-1 (fer1) from Haloarcula marismortui (strain ATCC 43049 / DSM 3752 / JCM 8966 / VKM B-1809) (Halobacterium marismortui).